A 289-amino-acid chain; its full sequence is Delta-sarcoglycan (289 aa).

The Cytoplasmic segment spans residues 1 to 37 (MPQEQYSHHRSTMPSSEGPHIYKVGIYGWRKRCLYFF). Residues 38–56 (VLLLMILILVNLAMTIWIL) form a helical; Signal-anchor for type II membrane protein membrane-spanning segment. The Extracellular portion of the chain corresponds to 57–289 (KVMNFTIDGM…TCQINTSVCL (233 aa)). Residues asparagine 60 and asparagine 108 are each glycosylated (N-linked (GlcNAc...) asparagine). Disulfide bonds link cysteine 263/cysteine 288 and cysteine 265/cysteine 281. An N-linked (GlcNAc...) asparagine glycan is attached at asparagine 284.

It belongs to the sarcoglycan beta/delta/gamma/zeta family. In terms of assembly, interacts with FLNC. Cross-link to form 2 major subcomplexes: one consisting of SGCB, SGCD and SGCG and the other consisting of SGCB and SGCD. The association between SGCB and SGCG is particularly strong while SGCA is loosely associated with the other sarcoglycans. Interacts with DAG1. Post-translationally, disulfide bonds are present. Most strongly expressed in skeletal and heart muscle. Also detected in proliferating myoblasts.

The protein resides in the cell membrane. It is found in the sarcolemma. It localises to the cytoplasm. The protein localises to the cytoskeleton. Functionally, component of the sarcoglycan complex, a subcomplex of the dystrophin-glycoprotein complex which forms a link between the F-actin cytoskeleton and the extracellular matrix. The chain is Delta-sarcoglycan (Sgcd) from Mus musculus (Mouse).